The primary structure comprises 178 residues: Ribosome maturation factor RimM (178 aa).

A PRC barrel domain is found at 93 to 170 (EGSYYYHELR…ALTADAPAGL (78 aa)).

This sequence belongs to the RimM family. As to quaternary structure, binds ribosomal protein uS19.

Its subcellular location is the cytoplasm. Its function is as follows. An accessory protein needed during the final step in the assembly of 30S ribosomal subunit, possibly for assembly of the head region. Essential for efficient processing of 16S rRNA. May be needed both before and after RbfA during the maturation of 16S rRNA. It has affinity for free ribosomal 30S subunits but not for 70S ribosomes. This Deinococcus geothermalis (strain DSM 11300 / CIP 105573 / AG-3a) protein is Ribosome maturation factor RimM.